The sequence spans 150 residues: Large ribosomal subunit protein bL9 (150 aa).

Belongs to the bacterial ribosomal protein bL9 family.

Functionally, binds to the 23S rRNA. This chain is Large ribosomal subunit protein bL9, found in Corynebacterium kroppenstedtii (strain DSM 44385 / JCM 11950 / CIP 105744 / CCUG 35717).